The chain runs to 25 residues: Antimicrobial peptide 3 (25 aa).

Skin.

Its subcellular location is the secreted. Its function is as follows. Has antibacterial activity against Gram-positive bacterium S.aureus and Gram-negative bacterium E.coli, when in combination with XT1 and XT6. This is Antimicrobial peptide 3 from Xenopus tropicalis (Western clawed frog).